The chain runs to 161 residues: Cyclic pyranopterin monophosphate synthase (161 aa).

Residues 75-77 (LCH) and 113-114 (ME) contribute to the substrate site. Asp-128 is a catalytic residue.

The protein belongs to the MoaC family. In terms of assembly, homohexamer; trimer of dimers.

The enzyme catalyses (8S)-3',8-cyclo-7,8-dihydroguanosine 5'-triphosphate = cyclic pyranopterin phosphate + diphosphate. The protein operates within cofactor biosynthesis; molybdopterin biosynthesis. Functionally, catalyzes the conversion of (8S)-3',8-cyclo-7,8-dihydroguanosine 5'-triphosphate to cyclic pyranopterin monophosphate (cPMP). In Cupriavidus pinatubonensis (strain JMP 134 / LMG 1197) (Cupriavidus necator (strain JMP 134)), this protein is Cyclic pyranopterin monophosphate synthase.